We begin with the raw amino-acid sequence, 107 residues long: Putative ankyrin repeat protein L14 (107 aa).

ANK repeat units lie at residues 19-48 (DNNY…NIRA), 49-78 (DNDC…NIRA), and 80-107 (NDCA…AVLS).

In Acanthamoeba polyphaga (Amoeba), this protein is Putative ankyrin repeat protein L14.